The sequence spans 131 residues: Small ribosomal subunit protein uS8 (131 aa).

The protein belongs to the universal ribosomal protein uS8 family. As to quaternary structure, part of the 30S ribosomal subunit. Contacts proteins S5 and S12.

Its function is as follows. One of the primary rRNA binding proteins, it binds directly to 16S rRNA central domain where it helps coordinate assembly of the platform of the 30S subunit. The sequence is that of Small ribosomal subunit protein uS8 from Novosphingobium aromaticivorans (strain ATCC 700278 / DSM 12444 / CCUG 56034 / CIP 105152 / NBRC 16084 / F199).